Here is a 307-residue protein sequence, read N- to C-terminus: MAEHYEALESKIGAPYYAKKAEKLISCAEYLSFKRDPETGKLKLYQAHFCKVRLCPMCAWRRSLKIAYHNKLIVEEANRQYGCGWIFLTLTVRNVKGERLKPQISEMMEGFRKLFQYKKVKTSVLGFFRALEITKNHEEDTYHPHFHVLIPVRKNYFGKNYIKQAEWTSLWKKAMKLDYTPIVDIRRVKGKAKIDAELIENDVREAMMEQKAVLEISKYPVKDTDVVRGNKVTEDNLNTVLYLDDALAARRLIGYRGILKEIHKELNLGDAEDGDLVKIRKKMTRLQMVHLRLWLIGILHIKNYIIK.

DNA is bound at residue Y219.

The protein belongs to the Gram-positive plasmids replication protein type 1 family.

In Bacillus sp, this protein is Protein rep (repA).